Consider the following 652-residue polypeptide: DNA ligase (652 aa).

Residues 29–33, 78–79, and glutamate 107 each bind NAD(+); these read DQEYD and SL. Lysine 109 acts as the N6-AMP-lysine intermediate in catalysis. NAD(+) contacts are provided by arginine 130, glutamate 164, lysine 278, and lysine 302. Zn(2+) is bound by residues cysteine 395, cysteine 398, cysteine 413, and cysteine 418. The 76-residue stretch at 577–652 folds into the BRCT domain; it reads DTSAQLFGLT…VKDENWLLQL (76 aa).

It belongs to the NAD-dependent DNA ligase family. LigA subfamily. Requires Mg(2+) as cofactor. It depends on Mn(2+) as a cofactor.

The enzyme catalyses NAD(+) + (deoxyribonucleotide)n-3'-hydroxyl + 5'-phospho-(deoxyribonucleotide)m = (deoxyribonucleotide)n+m + AMP + beta-nicotinamide D-nucleotide.. Functionally, DNA ligase that catalyzes the formation of phosphodiester linkages between 5'-phosphoryl and 3'-hydroxyl groups in double-stranded DNA using NAD as a coenzyme and as the energy source for the reaction. It is essential for DNA replication and repair of damaged DNA. This chain is DNA ligase, found in Streptococcus uberis (strain ATCC BAA-854 / 0140J).